A 415-amino-acid chain; its full sequence is Serine--tRNA ligase (415 aa).

Residue 231-233 (TAE) coordinates L-serine. ATP is bound at residue 262–264 (RSE). Residue E285 coordinates L-serine. ATP is bound at residue 349–352 (EISS). Residue S383 coordinates L-serine.

The protein belongs to the class-II aminoacyl-tRNA synthetase family. Type-1 seryl-tRNA synthetase subfamily. As to quaternary structure, homodimer. The tRNA molecule binds across the dimer.

It is found in the cytoplasm. It carries out the reaction tRNA(Ser) + L-serine + ATP = L-seryl-tRNA(Ser) + AMP + diphosphate + H(+). It catalyses the reaction tRNA(Sec) + L-serine + ATP = L-seryl-tRNA(Sec) + AMP + diphosphate + H(+). It functions in the pathway aminoacyl-tRNA biosynthesis; selenocysteinyl-tRNA(Sec) biosynthesis; L-seryl-tRNA(Sec) from L-serine and tRNA(Sec): step 1/1. Its function is as follows. Catalyzes the attachment of serine to tRNA(Ser). Is also able to aminoacylate tRNA(Sec) with serine, to form the misacylated tRNA L-seryl-tRNA(Sec), which will be further converted into selenocysteinyl-tRNA(Sec). The sequence is that of Serine--tRNA ligase from Helicobacter pylori (strain Shi470).